The primary structure comprises 1726 residues: Merozoite surface protein 1 (1726 aa).

Positions 1–19 are cleaved as a signal peptide; sequence MKIIFFLCSFLFFIINTQC. Positions 61–124 are enriched in low complexity; the sequence is KGASAQSGTS…SGTSGTSPSS (64 aa). Residues 61–149 form a disordered region; that stretch reads KGASAQSGTS…PPADASDSDA (89 aa). Residues 125 to 134 show a composition bias toward polar residues; it reads RSNTLPRSNT. Asn-133 carries N-linked (GlcNAc...) asparagine glycosylation. The span at 135 to 144 shows a compositional bias: low complexity; sequence SSGASPPADA. Asn-272, Asn-501, Asn-567, and Asn-638 each carry an N-linked (GlcNAc...) asparagine glycan. The interval 735 to 771 is disordered; the sequence is SETTEDGGHSTHTLSQSGETEVTEETEETEETVGHTT. The segment covering 755 to 765 has biased composition (acidic residues); it reads EVTEETEETEE. N-linked (GlcNAc...) asparagine glycosylation is found at Asn-827, Asn-924, Asn-944, Asn-990, Asn-1016, Asn-1114, and Asn-1221. Low complexity predominate over residues 914-952; that stretch reads TGTSSTSSPGNTTVNTAQSATHSNSQNQQSNASSTNTQN. The interval 914–961 is disordered; sequence TGTSSTSSPGNTTVNTAQSATHSNSQNQQSNASSTNTQNGVAVSSGPA. Disordered stretches follow at residues 1254–1284 and 1476–1497; these read VTPP…TQIP and KEKF…DEQK. The segment covering 1270–1284 has biased composition (polar residues); it reads VSGSSGSTKEETQIP. Residues 1481–1490 show a composition bias toward pro residues; sequence SSPPTTPPSP. A glycan (N-linked (GlcNAc...) asparagine) is linked at Asn-1613. EGF-like domains are found at residues 1617–1657 and 1658–1705; these read HQCV…VENP and NPTC…IFCS. 6 disulfide bridges follow: Cys-1619–Cys-1630, Cys-1624–Cys-1640, Cys-1642–Cys-1653, Cys-1661–Cys-1674, Cys-1668–Cys-1688, and Cys-1690–Cys-1704. A lipid anchor (GPI-anchor amidated serine) is attached at Ser-1705. Positions 1706–1726 are cleaved as a propeptide — removed in mature form; it reads SSNFLGISFLLILMLILYSFI.

In terms of assembly, forms a complex composed of subunits p83, p30, p38, and p42 which remain non-covalently associated; the complex is formed at the merozoite surface prior to egress from host erythrocytes. Forms a complex composed of processed MSP1 subunits, MSP6 subunit p36 and MSP7; the complex is formed at the merozoite surface prior to egress from host erythrocytes. Within the complex, interacts (via subunit p38) with MSP6 subunit p36 and (via subunits p83, p30 and p38) with MSP7 (via subunit p22). Forms a complex composed of MSP1, MSP6, DBLMSP1 and DBLMSP2. Within the complex, interacts (via subunit p38) with DBLMSP1 and DBLMSP2. Forms a complex composed of MSP1, and rhoptry proteins RhopH3, RAP1 and CLAG9/RhopH3. Within the complex, interacts (via subunits p42 and p19) with RhopH3 (via C-terminus). Forms a complex composed of MSP1, MSP6, MSP7, MSP9 and MSP3; within the complex, MSP6 and MSP9 mediate the binding to the host erythrocyte. Interacts (via subunits p19 and p42) with MSP9; the interaction is direct; MSP1 subunits p19 or p42, and MSP9 form a co-ligand complex that interacts with host SLC4A1/Band 3 protein. May interact with PFD6. Interacts with host spectrin. As to quaternary structure, interacts with host glycophorin GYPA in a sialic acid-independent manner. Interacts with host proinflammatory cytokine S100P; the interaction blocks S100P inflammatory and chemotactic activities. In terms of assembly, interacts with host SLC4A1/Band 3 (via 5ABC region) on the host erythrocyte surface in a sialic acid-independent manner. In terms of processing, the p190 precursor is cleaved by SUB1 prior to merozoite egress into 4 subunits p83, p30, p38, and p42 which remain non-covalently associated. SUB1-mediated proteolytic cleavage occurs in an orderly manner; the first cleavage occurs at the p30/p38 site, followed by cleavage at the p83/p30 site, the last cleavage occurs at the p38/p42 site. The order of cleavage is essential for parasite viability. SUB1-mediated processing is essential for merozoite egress. In a second processing step during erythrocyte invasion, p42 is cleaved by SUB2 into p33 and p19; the latter remains attached to the merozoite surface via its GPI-anchor and is endocytosed during the subsequent ring stage.

The protein resides in the cell membrane. It localises to the secreted. It is found in the vacuole membrane. In terms of biological role, during the asexual blood stage, involved in merozoite egress from host erythrocytes possibly via its interaction with the host cytoskeleton protein spectrin resulting in the destabilization of the host cytoskeleton and thus leading to erythrocyte cell membrane rupture. Involved in the binding to host erythrocytes and is required for host erythrocyte invasion. By binding to host proinflammatory cytokine S100P may interfere with host immune responses. Its function is as follows. Involved in merozoite invasion of host erythrocytes. May play a role in the biogenesis and/or function of the food vacuole during the intraerythrocytic development. The chain is Merozoite surface protein 1 from Plasmodium falciparum (isolate Palo Alto / Uganda).